The following is a 313-amino-acid chain: 3'-5' exoribonuclease YhaM (313 aa).

An HD domain is found at 163–279 (HVVSMLRLAK…LHQIDLMDAS (117 aa)).

It belongs to the YhaM family.

Functionally, shows a 3'-5' exoribonuclease activity. The sequence is that of 3'-5' exoribonuclease YhaM from Listeria welshimeri serovar 6b (strain ATCC 35897 / DSM 20650 / CCUG 15529 / CIP 8149 / NCTC 11857 / SLCC 5334 / V8).